The sequence spans 736 residues: MSFRKPPIRLATQVGGKEIIFETGYMATQANGSLTVQCGGTIVLVTVCSQPLESDKGFFPLTVEYSEKMYAAGRIPGSFFRREIGRPSERETLISRLIDRPIRPMFPKGLAEDVQILANVISSDQENESDILAVTGASAAVMLSSLPFECAIAAGRIGRLNGQFVLNPTINEIELSDLNIVFAASSEAVVMVEGEANVVEEEIIIEALEWGHKEIQPIITLQNKIQELAGRNKIPFVPVEENIVFSKKVEELADKFGIVEAMQVKEKQFRKEARKAVKEKVLAILKEDPLYAEHSDILNTVSEIIGNLEKKIVRQRIVKENLRIDGRDTITVRPIAIEVGLLPRTHGSALFTRGETQSLCITTLGSSTDNQRVDSLAGDTVKNFMLHYNFPPFSVGEVKPVRVSRREIGHGALAEKALKYILPSQNTFPFTVRIVAETLESNGSSSMAAICGGCLSLMDAGVPISAPVAGVAMGLIKEDDQFIVLTDIIGDEDAFGDMDFKIAGTTKGITAVQMDIKITGLTTDVMRKAMEQAREARIHILSEMAKALDVPRSNLSQYAPQHAELVVNPDAIRMIIGPGGKNIKQITTVTGAAIDINDSGKISIFAPTSEAMEQAKQMILYYDQRPELGKNYKGKVRKILEIGAILEIMPNVEAFVHISQLAVEHIAQVTDVVQLGEDMIIKVIEITGDRVRASRKAVLLEEEGITWTPEESSRFSKGNRNGDRSRHNNRERTRRT.

Mg(2+) is bound by residues Asp-493 and Asp-499. A KH domain is found at 560-619 (PQHAELVVNPDAIRMIIGPGGKNIKQITTVTGAAIDINDSGKISIFAPTSEAMEQAKQMI). One can recognise an S1 motif domain in the interval 629-703 (GKNYKGKVRK…SRKAVLLEEE (75 aa)). Residues 710–736 (EESSRFSKGNRNGDRSRHNNRERTRRT) are disordered. Basic and acidic residues predominate over residues 720-736 (RNGDRSRHNNRERTRRT).

Belongs to the polyribonucleotide nucleotidyltransferase family. The cofactor is Mg(2+).

It localises to the cytoplasm. The enzyme catalyses RNA(n+1) + phosphate = RNA(n) + a ribonucleoside 5'-diphosphate. In terms of biological role, involved in mRNA degradation. Catalyzes the phosphorolysis of single-stranded polyribonucleotides processively in the 3'- to 5'-direction. This chain is Polyribonucleotide nucleotidyltransferase, found in Lawsonia intracellularis (strain PHE/MN1-00).